The sequence spans 656 residues: Pheromone-regulated membrane protein 2 (656 aa).

4 helical membrane passes run 16–36 (FFSCIFHPLLLIFFTSVILTI), 320–340 (IIFTVMYFAFVILLMAIERIL), 422–442 (WIISNGAHLWLFGFLMLLIHW), and 634–654 (WGLLAVCLTILFHHMLIFIIL).

Its subcellular location is the membrane. This is Pheromone-regulated membrane protein 2 (PRM2) from Saccharomyces cerevisiae (strain ATCC 204508 / S288c) (Baker's yeast).